Consider the following 117-residue polypeptide: Small ribosomal subunit protein bS18c (117 aa).

The tract at residues 86 to 117 is disordered; the sequence is SELTPRTNALKARNKNKQNKYQNNQTKFLSNF.

Belongs to the bacterial ribosomal protein bS18 family. As to quaternary structure, part of the 30S ribosomal subunit.

It localises to the plastid. In Cuscuta exaltata (Tall dodder), this protein is Small ribosomal subunit protein bS18c.